Reading from the N-terminus, the 255-residue chain is Type III pantothenate kinase (255 aa).

6–13 (DVGNTNTV) contributes to the ATP binding site. Residues tyrosine 100 and 107–110 (GADR) contribute to the substrate site. The active-site Proton acceptor is the aspartate 109. Aspartate 129 contributes to the K(+) binding site. Position 132 (threonine 132) interacts with ATP. Threonine 184 provides a ligand contact to substrate.

Belongs to the type III pantothenate kinase family. In terms of assembly, homodimer. Requires NH4(+) as cofactor. It depends on K(+) as a cofactor.

The protein resides in the cytoplasm. The enzyme catalyses (R)-pantothenate + ATP = (R)-4'-phosphopantothenate + ADP + H(+). It participates in cofactor biosynthesis; coenzyme A biosynthesis; CoA from (R)-pantothenate: step 1/5. Its function is as follows. Catalyzes the phosphorylation of pantothenate (Pan), the first step in CoA biosynthesis. The sequence is that of Type III pantothenate kinase from Syntrophotalea carbinolica (strain DSM 2380 / NBRC 103641 / GraBd1) (Pelobacter carbinolicus).